A 344-amino-acid chain; its full sequence is L-rhamnose-proton symporter (344 aa).

The next 10 membrane-spanning stretches (helical) occupy residues 4-24, 38-58, 68-88, 101-121, 137-157, 175-195, 214-234, 259-279, 290-310, and 323-343; these read AITMGIFWHLIGAASAACFYA, WSVGGIVSWIILPWAISALLL, FSLSTLLPVFLFGAMWGIGNI, MGIGIAIGITLIVGTLMTPII, TLLGVLVALIGVGIVTRAGQL, LVLAVMCGIFSAGMSFAMNAA, LPSYVIIMGGGAIINLGFCFI, VLLSALGGLMWYLQFFFYAWG, ISWMLHMSFYVLCGGIVGLVL, and VLSLGCVVIIVAANIVGIGMA.

The protein belongs to the L-rhamnose transporter (TC 2.A.7.6) family.

It localises to the cell inner membrane. The enzyme catalyses L-rhamnopyranose(in) + H(+)(in) = L-rhamnopyranose(out) + H(+)(out). Its function is as follows. Uptake of L-rhamnose across the cytoplasmic membrane with the concomitant transport of protons into the cell (symport system). In Escherichia coli (strain 55989 / EAEC), this protein is L-rhamnose-proton symporter.